Here is a 54-residue protein sequence, read N- to C-terminus: Large ribosomal subunit protein bL33B (54 aa).

Belongs to the bacterial ribosomal protein bL33 family.

The sequence is that of Large ribosomal subunit protein bL33B from Mycolicibacterium smegmatis (strain ATCC 700084 / mc(2)155) (Mycobacterium smegmatis).